A 426-amino-acid chain; its full sequence is Serine/threonine-protein kinase ssn3 (426 aa).

The Protein kinase domain occupies 39-368 (YHIVGFISSG…AKEALEHPYF (330 aa)). ATP is bound by residues 45-53 (ISSGTYGRV) and lysine 69. Aspartate 171 acts as the Proton acceptor in catalysis. Over residues 389–398 (RRITHDDNDI) the composition is skewed to basic and acidic residues. Positions 389-426 (RRITHDDNDIRSGSLPGTKRSGLPDDSLMSRAAKRMKE) are disordered.

Belongs to the protein kinase superfamily. CMGC Ser/Thr protein kinase family. CDC2/CDKX subfamily. Component of the srb8-11 complex, a regulatory module of the Mediator complex. Requires Mg(2+) as cofactor.

Its subcellular location is the nucleus. The catalysed reaction is L-seryl-[protein] + ATP = O-phospho-L-seryl-[protein] + ADP + H(+). It catalyses the reaction L-threonyl-[protein] + ATP = O-phospho-L-threonyl-[protein] + ADP + H(+). The enzyme catalyses [DNA-directed RNA polymerase] + ATP = phospho-[DNA-directed RNA polymerase] + ADP + H(+). In terms of biological role, component of the srb8-11 complex. The srb8-11 complex is a regulatory module of the Mediator complex which is itself involved in regulation of basal and activated RNA polymerase II-dependent transcription. The srb8-11 complex may be involved in the transcriptional repression of a subset of genes regulated by Mediator. It may inhibit the association of the Mediator complex with RNA polymerase II to form the holoenzyme complex. The srb8-11 complex phosphorylates the C-terminal domain (CTD) of the largest subunit of RNA polymerase II. The chain is Serine/threonine-protein kinase ssn3 (ssn3) from Emericella nidulans (strain FGSC A4 / ATCC 38163 / CBS 112.46 / NRRL 194 / M139) (Aspergillus nidulans).